Consider the following 247-residue polypeptide: Fasciclin-like arabinogalactan protein 6 (247 aa).

Positions 1–23 (MSSSLFSYVVLLIFLFTIPYIQS) are cleaved as a signal peptide. The FAS1 domain occupies 36 to 182 (PINLTAILEA…LAVYVVDSVL (147 aa)). N-linked (GlcNAc...) asparagine glycosylation is found at asparagine 38, asparagine 57, asparagine 70, asparagine 142, and asparagine 153. The span at 192-212 (TTPTGAPAPKSSTSSSDADSP) shows a compositional bias: low complexity. The segment at 192–221 (TTPTGAPAPKSSTSSSDADSPAADDEHKSA) is disordered. Glycine 222 is lipidated: GPI-anchor amidated glycine. A propeptide spans 223 to 247 (SSVKRTSLGIVVSFALFCCSVIYIA) (removed in mature form).

It belongs to the fasciclin-like AGP family.

Its subcellular location is the cell membrane. In terms of biological role, may be a cell surface adhesion protein. The chain is Fasciclin-like arabinogalactan protein 6 (FLA6) from Arabidopsis thaliana (Mouse-ear cress).